The chain runs to 744 residues: 5-methyltetrahydropteroyltriglutamate--homocysteine methyltransferase (744 aa).

5-methyltetrahydropteroyltri-L-glutamate-binding positions include arginine 17–lysine 20 and lysine 110. L-homocysteine is bound by residues isoleucine 422–serine 424 and glutamate 475. L-methionine is bound by residues isoleucine 422–serine 424 and glutamate 475. Tryptophan 552 is a 5-methyltetrahydropteroyltri-L-glutamate binding site. Position 590 (aspartate 590) interacts with L-homocysteine. Aspartate 590 lines the L-methionine pocket. Glutamate 596 provides a ligand contact to 5-methyltetrahydropteroyltri-L-glutamate. The Zn(2+) site is built by histidine 632, cysteine 634, and glutamate 656. Histidine 685 serves as the catalytic Proton donor. Cysteine 717 contributes to the Zn(2+) binding site.

The protein belongs to the vitamin-B12 independent methionine synthase family. Zn(2+) serves as cofactor.

The enzyme catalyses 5-methyltetrahydropteroyltri-L-glutamate + L-homocysteine = tetrahydropteroyltri-L-glutamate + L-methionine. Its pathway is amino-acid biosynthesis; L-methionine biosynthesis via de novo pathway; L-methionine from L-homocysteine (MetE route): step 1/1. Its function is as follows. Catalyzes the transfer of a methyl group from 5-methyltetrahydrofolate to homocysteine resulting in methionine formation. This is 5-methyltetrahydropteroyltriglutamate--homocysteine methyltransferase from Trichodesmium erythraeum (strain IMS101).